Consider the following 201-residue polypeptide: MSSILRLDRLRQFIGELATLLDSRPDESTLLAQAHPLLAELVHQDDWLPEDCARPDPQRYQQYLLHVDSRQRFSVVSFVWGPGQITPVHDHRVWGLIGMLRGAEYSQPYAFDAGGRPHPSGARRRLEPGEVEALSPRIGDVHQVSNAFSDRTSISIHVYGANIGAVRRAVFSAEGEEKPFISGYSNSRLPNIWDLSKENPA.

Residues histidine 89, histidine 91, and histidine 142 each coordinate Fe cation.

The protein belongs to the cysteine dioxygenase family. As to quaternary structure, forms homodimer in the crystal; however, there is no evidence that the dimer exists under physiological conditions or has biological significance. It depends on Fe(2+) as a cofactor.

The enzyme catalyses 3-sulfanylpropanoate + O2 = 3-sulfinopropanoate + H(+). In terms of biological role, thiol dioxygenase that catalyzes the dioxygenation of 3-mercaptopropionate (3-MPA) to 3-sulfinopropionate (3-SPA). To a lesser extent (40-fold lower efficiency), is also able to oxidize cysteine to cysteine sulfinate (CSA). Cannot use N-acetyl-L-cysteine, homocysteine, and cysteamine as substrates. The physiological role of this enzyme is unclear. The polypeptide is 3-mercaptopropionate dioxygenase (Pseudomonas aeruginosa (strain ATCC 15692 / DSM 22644 / CIP 104116 / JCM 14847 / LMG 12228 / 1C / PRS 101 / PAO1)).